The primary structure comprises 472 residues: Divalent metal cation transporter MntH (472 aa).

Helical transmembrane passes span 59 to 79, 92 to 112, 144 to 164, 167 to 187, 196 to 216, 233 to 253, 288 to 308, 325 to 345, 377 to 397, 402 to 422, and 439 to 459; these read LLAFLGPGYMVSVGYMDPGNW, MLLSVILLSNVMAIVLQALAA, LAIIACDLAEVIGTAIALNLL, VPIILGAVITAVDVVLVLLLM, AFVIALLLVIFGCFVVQIVLA, VVADPQALYLAIGIVGATVMP, LALMLALFINASILILAAAVF, LLAPVLGVGVAATLFATALLA, VLTRGLAIVPVIVVVALYGEQ, LLLLSQVILSMQLPFAVIPLL, and WLMVVAWLIAGVIVVLNVKLL.

Belongs to the NRAMP family.

The protein localises to the cell inner membrane. Its function is as follows. H(+)-stimulated, divalent metal cation uptake system. The sequence is that of Divalent metal cation transporter MntH from Xylella fastidiosa (strain Temecula1 / ATCC 700964).